Here is a 46-residue protein sequence, read N- to C-terminus: Osteocalcin 2 (46 aa).

The Gla domain maps to 1–43; the sequence is AVPAGTLSPLQMESLREVCEVNVACDEMADTAGIVAAYTXFYG. Thr6 is modified (phosphothreonine). Residues Glu13, Glu17, Glu20, and Asp26 each coordinate Ca(2+). A 4-carboxyglutamate mark is found at Glu13, Glu17, and Glu20. Cysteines 19 and 25 form a disulfide. A 4-carboxyglutamate modification is found at Glu27.

The protein belongs to the osteocalcin/matrix Gla protein family. Gamma-carboxyglutamate residues are formed by vitamin K dependent carboxylation by GGCX. These residues are essential for the binding of calcium.

The protein resides in the secreted. Its function is as follows. The carboxylated form is one of the main organic components of the bone matrix, which constitutes 1-2% of the total bone protein. The carboxylated form binds strongly to apatite and calcium. The protein is Osteocalcin 2 of Solea senegalensis (Senegalese sole).